A 344-amino-acid chain; its full sequence is Acireductone dioxygenase (344 aa).

Fe(2+) contacts are provided by histidine 92, histidine 94, glutamate 98, and histidine 137. Ni(2+) is bound by residues histidine 92, histidine 94, glutamate 98, and histidine 137.

The protein belongs to the acireductone dioxygenase (ARD) family. Fe(2+) is required as a cofactor. It depends on Ni(2+) as a cofactor.

The protein localises to the cytoplasm. It localises to the nucleus. It carries out the reaction 1,2-dihydroxy-5-(methylsulfanyl)pent-1-en-3-one + O2 = 4-methylsulfanyl-2-oxobutanoate + formate + 2 H(+). The enzyme catalyses 1,2-dihydroxy-5-(methylsulfanyl)pent-1-en-3-one + O2 = 3-(methylsulfanyl)propanoate + CO + formate + 2 H(+). It functions in the pathway amino-acid biosynthesis; L-methionine biosynthesis via salvage pathway; L-methionine from S-methyl-5-thio-alpha-D-ribose 1-phosphate: step 5/6. Catalyzes 2 different reactions between oxygen and the acireductone 1,2-dihydroxy-3-keto-5-methylthiopentene (DHK-MTPene) depending upon the metal bound in the active site. Fe-containing acireductone dioxygenase (Fe-ARD) produces formate and 2-keto-4-methylthiobutyrate (KMTB), the alpha-ketoacid precursor of methionine in the methionine recycle pathway. Ni-containing acireductone dioxygenase (Ni-ARD) produces methylthiopropionate, carbon monoxide and formate, and does not lie on the methionine recycle pathway. In Leishmania infantum, this protein is Acireductone dioxygenase.